We begin with the raw amino-acid sequence, 52 residues long: Conotoxin reg3h (52 aa).

Ala1 is a signal peptide. The propeptide occupies 2 to 33 (LPLDGDQPADQPAERMQDISPELNPLFHPVKR). 3 disulfides stabilise this stretch: Cys35–Cys49, Cys36–Cys47, and Cys41–Cys50. A 4-hydroxyproline mark is found at Pro38, Pro48, and Pro51. Asn52 bears the Asparagine amide mark.

Expressed by the venom duct.

The protein resides in the secreted. In Conus regius (Crown cone), this protein is Conotoxin reg3h.